A 349-amino-acid polypeptide reads, in one-letter code: Quinone oxidoreductase-like protein 1 (349 aa).

Belongs to the zinc-containing alcohol dehydrogenase family. Quinone oxidoreductase subfamily. As to quaternary structure, homodimer. Component of the FERRY complex composed of five subunits, TBCK, PPP1R21, FERRY3, CRYZL1 and GATD1 with a ratio of 1:2:1:2:4, respectively. Ubiquitous.

It localises to the early endosome. Functionally, component of the FERRY complex (Five-subunit Endosomal Rab5 and RNA/ribosome intermediary). The FERRY complex directly interacts with mRNAs and RAB5A, and functions as a RAB5A effector involved in the localization and the distribution of specific mRNAs most likely by mediating their endosomal transport. The complex recruits mRNAs and ribosomes to early endosomes through direct mRNA-interaction. The polypeptide is Quinone oxidoreductase-like protein 1 (CRYZL1) (Homo sapiens (Human)).